We begin with the raw amino-acid sequence, 993 residues long: Serine/threonine-protein phosphatase 6 regulatory ankyrin repeat subunit B (993 aa).

ANK repeat units follow at residues 7–36 (CEQP…DVNA), 40–69 (EKRT…RVNA), 73–102 (MWLT…DVNA), 106–135 (NWQT…SVNV), 139–168 (GGRT…NINA), 172–201 (KDRR…EVTC), 205–234 (KGYT…EIDE), 238–267 (YGNT…NVNQ), 271–301 (SGFT…DVNI), 305–334 (DGKS…EIDC), 338–367 (DGNT…DTAK), 371–400 (HSMF…EIDT), 404–433 (FGRT…DFHK), 437–466 (CGRT…NVNE), 470–498 (WGRT…DNSE), 531–561 (EGYN…GFEE), 566–595 (ALKS…DLDI), 599–628 (KGRT…SIFV), 633–662 (TKRT…NPEV), 669–698 (KGQT…NVDA), 702–731 (VGCT…SILC), 735–764 (RGRT…SEED), 771–800 (QGYT…FRKF), 803–832 (NPFT…PSIV), 838–867 (KGRT…QVNA), 871–901 (SGKT…DLTV), 905–934 (DLNT…DESL), and 941–970 (ALQT…CVLA). The interval 974–993 (NASRSNGPRSPPGTAVRKEE) is disordered.

As to quaternary structure, protein phosphatase 6 (PP6) holoenzyme is proposed to be a heterotrimeric complex formed by the catalytic subunit, a SAPS domain-containing subunit (PP6R) and an ankyrin repeat-domain containing regulatory subunit (ARS). Interacts with PPP6R1.

Functionally, putative regulatory subunit of protein phosphatase 6 (PP6) that may be involved in the recognition of phosphoprotein substrates. This chain is Serine/threonine-protein phosphatase 6 regulatory ankyrin repeat subunit B (Ankrd44), found in Mus musculus (Mouse).